The following is a 207-amino-acid chain: Large ribosomal subunit protein bL25 (207 aa).

Belongs to the bacterial ribosomal protein bL25 family. CTC subfamily. As to quaternary structure, part of the 50S ribosomal subunit; part of the 5S rRNA/L5/L18/L25 subcomplex. Contacts the 5S rRNA. Binds to the 5S rRNA independently of L5 and L18.

Functionally, this is one of the proteins that binds to the 5S RNA in the ribosome where it forms part of the central protuberance. The sequence is that of Large ribosomal subunit protein bL25 from Brucella abortus (strain S19).